A 386-amino-acid polypeptide reads, in one-letter code: Galactokinase (386 aa).

Residue 32 to 35 coordinates substrate; that stretch reads EHTD. Residues S66 and 123–129 each bind ATP; that span reads GASLSSS. The Mg(2+) site is built by S129 and E161. The active-site Proton acceptor is the D173. A substrate-binding site is contributed by Y223.

The protein belongs to the GHMP kinase family. GalK subfamily.

It is found in the cytoplasm. The enzyme catalyses alpha-D-galactose + ATP = alpha-D-galactose 1-phosphate + ADP + H(+). The protein operates within carbohydrate metabolism; galactose metabolism. Catalyzes the transfer of the gamma-phosphate of ATP to D-galactose to form alpha-D-galactose-1-phosphate (Gal-1-P). In Staphylococcus saprophyticus subsp. saprophyticus (strain ATCC 15305 / DSM 20229 / NCIMB 8711 / NCTC 7292 / S-41), this protein is Galactokinase.